A 151-amino-acid polypeptide reads, in one-letter code: Caveolin-3 (151 aa).

Topologically, residues 1-83 are cytoplasmic; it reads MMAEEHTDLE…RLLSTLLGVP (83 aa). Lys38 is covalently cross-linked (Glycyl lysine isopeptide (Lys-Gly) (interchain with G-Cter in SUMO3)). The required for interaction with DAG1 stretch occupies residues 64-114; it reads TFTVSKYWCYRLLSTLLGVPLALLWGFLFACISFCHIWAVVPCIKSYLIEI. The segment at residues 84–104 is an intramembrane region (helical); that stretch reads LALLWGFLFACISFCHIWAVV. At 105–151 the chain is on the cytoplasmic side; the sequence is PCIKSYLIEIQCISHIYSLCIRTFCNPLFAALGQVCSNIKVMLRKEV.

It belongs to the caveolin family. As to quaternary structure, homooligomer. Interacts with DYSF. Interacts with DLG1 and KCNA5; forms a ternary complex. Interacts with DAG1 (via its C-terminal); the interaction prevents binding of DAG1 with DMD. Interacts with TRIM72. Interacts with MUSK; may regulate MUSK signaling. Interacts with POPDC1. Interacts with CAVIN1, CAVIN2 and CAVIN4. In terms of processing, sumoylation with SUMO3 by PIAS4 may reduce agonist-induced internalization and desensitization of adrenergic receptor ABRD2.

The protein localises to the golgi apparatus membrane. It localises to the cell membrane. The protein resides in the membrane. It is found in the caveola. Its subcellular location is the sarcolemma. In terms of biological role, may act as a scaffolding protein within caveolar membranes. Interacts directly with G-protein alpha subunits and can functionally regulate their activity. May also regulate voltage-gated potassium channels. Plays a role in the sarcolemma repair mechanism of both skeletal muscle and cardiomyocytes that permits rapid resealing of membranes disrupted by mechanical stress. Mediates the recruitment of CAVIN2 and CAVIN3 proteins to the caveolae. The polypeptide is Caveolin-3 (CAV3) (Bos taurus (Bovine)).